The primary structure comprises 268 residues: Indole-3-glycerol phosphate synthase (268 aa).

This sequence belongs to the TrpC family.

It catalyses the reaction 1-(2-carboxyphenylamino)-1-deoxy-D-ribulose 5-phosphate + H(+) = (1S,2R)-1-C-(indol-3-yl)glycerol 3-phosphate + CO2 + H2O. The protein operates within amino-acid biosynthesis; L-tryptophan biosynthesis; L-tryptophan from chorismate: step 4/5. The sequence is that of Indole-3-glycerol phosphate synthase from Acinetobacter baumannii (strain AB0057).